Reading from the N-terminus, the 378-residue chain is Ribosomal RNA large subunit methyltransferase G (378 aa).

It belongs to the methyltransferase superfamily. RlmG family.

The protein localises to the cytoplasm. The enzyme catalyses guanosine(1835) in 23S rRNA + S-adenosyl-L-methionine = N(2)-methylguanosine(1835) in 23S rRNA + S-adenosyl-L-homocysteine + H(+). Functionally, specifically methylates the guanine in position 1835 (m2G1835) of 23S rRNA. This Salmonella gallinarum (strain 287/91 / NCTC 13346) protein is Ribosomal RNA large subunit methyltransferase G.